Reading from the N-terminus, the 218-residue chain is uncharacterized protein (218 aa).

This is an uncharacterized protein from Caenorhabditis elegans.